The primary structure comprises 227 residues: Ribonuclease 3 (227 aa).

One can recognise an RNase III domain in the interval 4-133 (FEELEKLLDY…LIAAIYLDSD (130 aa)). E46 contributes to the Mg(2+) binding site. Residue D50 is part of the active site. Residues N119 and E122 each contribute to the Mg(2+) site. Residue E122 is part of the active site. The DRBM domain occupies 158–226 (DPKTALQEWA…ARELLHKLKL (69 aa)).

It belongs to the ribonuclease III family. As to quaternary structure, homodimer. Mg(2+) serves as cofactor.

Its subcellular location is the cytoplasm. It carries out the reaction Endonucleolytic cleavage to 5'-phosphomonoester.. Its function is as follows. Digests double-stranded RNA. Involved in the processing of primary rRNA transcript to yield the immediate precursors to the large and small rRNAs (23S and 16S). Processes some mRNAs, and tRNAs when they are encoded in the rRNA operon. Processes pre-crRNA and tracrRNA of type II CRISPR loci if present in the organism. The sequence is that of Ribonuclease 3 from Rickettsia bellii (strain OSU 85-389).